The sequence spans 346 residues: Ribosomal RNA small subunit methyltransferase H (346 aa).

S-adenosyl-L-methionine contacts are provided by residues glycine 46–tyrosine 48, aspartate 63, phenylalanine 90, aspartate 113, and glutamine 120. The tract at residues glycine 270 to serine 346 is disordered.

The protein belongs to the methyltransferase superfamily. RsmH family.

It is found in the cytoplasm. The catalysed reaction is cytidine(1402) in 16S rRNA + S-adenosyl-L-methionine = N(4)-methylcytidine(1402) in 16S rRNA + S-adenosyl-L-homocysteine + H(+). Specifically methylates the N4 position of cytidine in position 1402 (C1402) of 16S rRNA. This Brucella abortus (strain S19) protein is Ribosomal RNA small subunit methyltransferase H.